A 929-amino-acid chain; its full sequence is Isoleucine--tRNA ligase (929 aa).

The 'HIGH' region signature appears at 57-67 (PYANGNIHVGH). L-isoleucyl-5'-AMP is bound at residue glutamate 554. The 'KMSKS' region motif lies at 595 to 599 (KMSKS). Lysine 598 is a binding site for ATP. Positions 888, 891, 908, and 911 each coordinate Zn(2+).

The protein belongs to the class-I aminoacyl-tRNA synthetase family. IleS type 1 subfamily. In terms of assembly, monomer. The cofactor is Zn(2+).

The protein resides in the cytoplasm. The catalysed reaction is tRNA(Ile) + L-isoleucine + ATP = L-isoleucyl-tRNA(Ile) + AMP + diphosphate. Functionally, catalyzes the attachment of isoleucine to tRNA(Ile). As IleRS can inadvertently accommodate and process structurally similar amino acids such as valine, to avoid such errors it has two additional distinct tRNA(Ile)-dependent editing activities. One activity is designated as 'pretransfer' editing and involves the hydrolysis of activated Val-AMP. The other activity is designated 'posttransfer' editing and involves deacylation of mischarged Val-tRNA(Ile). The protein is Isoleucine--tRNA ligase of Streptococcus thermophilus (strain ATCC BAA-491 / LMD-9).